The following is a 331-amino-acid chain: tRNA-cytidine(32) 2-sulfurtransferase (331 aa).

The interval 1-33 (MNAPHMNDTAADAATLDDAAAPAGRPALTRREQ) is disordered. The segment covering 8 to 23 (DTAADAATLDDAAAPA) has biased composition (low complexity). The short motif at 71 to 76 (SGGKDS) is the PP-loop motif element. Residues C146, C149, and C237 each coordinate [4Fe-4S] cluster.

It belongs to the TtcA family. Homodimer. Mg(2+) serves as cofactor. It depends on [4Fe-4S] cluster as a cofactor.

It localises to the cytoplasm. The enzyme catalyses cytidine(32) in tRNA + S-sulfanyl-L-cysteinyl-[cysteine desulfurase] + AH2 + ATP = 2-thiocytidine(32) in tRNA + L-cysteinyl-[cysteine desulfurase] + A + AMP + diphosphate + H(+). It functions in the pathway tRNA modification. Catalyzes the ATP-dependent 2-thiolation of cytidine in position 32 of tRNA, to form 2-thiocytidine (s(2)C32). The sulfur atoms are provided by the cysteine/cysteine desulfurase (IscS) system. The sequence is that of tRNA-cytidine(32) 2-sulfurtransferase from Burkholderia cenocepacia (strain HI2424).